The primary structure comprises 372 residues: Cytochrome b (372 aa).

Transmembrane regions (helical) follow at residues 25–45, 69–90, 105–125, and 170–190; these read FGSMLLTCSALQIMTGFFLSM, WMMQNLHAIGASMFFICVYIHV, WLSGTTLLIMLMATAFFGYVL, and FFALHFILPFGIISLSSLHIM. Residues histidine 75 and histidine 89 each contribute to the heme b site. Heme b contacts are provided by histidine 174 and histidine 188. Histidine 193 serves as a coordination point for a ubiquinone. Transmembrane regions (helical) follow at residues 218-238, 280-300, 312-332, and 339-358; these read YKDLFMISSMIMIMLLTISFI, LGGALALAMSITILLTVPFTH, FMQLMFWTLVTTFMIITWTAT, and YTMISQVTSSLYFMFFMSNP.

The protein belongs to the cytochrome b family. In terms of assembly, the cytochrome bc1 complex contains 3 respiratory subunits (MT-CYB, CYC1 and UQCRFS1), 2 core proteins (UQCRC1 and UQCRC2) and probably 6 low-molecular weight proteins. Heme b is required as a cofactor.

The protein localises to the mitochondrion inner membrane. Functionally, component of the ubiquinol-cytochrome c reductase complex (complex III or cytochrome b-c1 complex) that is part of the mitochondrial respiratory chain. The b-c1 complex mediates electron transfer from ubiquinol to cytochrome c. Contributes to the generation of a proton gradient across the mitochondrial membrane that is then used for ATP synthesis. This chain is Cytochrome b (MT-CYB), found in Acrantophis dumerili (Dumeril's ground boa).